Reading from the N-terminus, the 192-residue chain is uncharacterized protein (192 aa).

One can recognise a Nudix hydrolase domain in the interval 29 to 160 (HRQAAVLIPI…PLDIYRRGDS (132 aa)). Positions 67–89 (GAVDDTDASVIAAALREAEEEVA) match the Nudix box motif. The Mg(2+) site is built by Glu83 and Glu87.

It belongs to the Nudix hydrolase family. PCD1 subfamily. Mn(2+) serves as cofactor. It depends on Mg(2+) as a cofactor.

Functionally, probably mediates the hydrolysis of some nucleoside diphosphate derivatives. This is an uncharacterized protein from Escherichia coli O139:H28 (strain E24377A / ETEC).